The following is a 208-amino-acid chain: ER membrane protein complex subunit 8/9 homolog (208 aa).

Positions 11 to 146 (YEISQNAYIK…ERSPVMQLCV (136 aa)) constitute an MPN domain.

This sequence belongs to the EMC8/EMC9 family.

The sequence is that of ER membrane protein complex subunit 8/9 homolog (EMB2731) from Arabidopsis thaliana (Mouse-ear cress).